The following is a 312-amino-acid chain: Tetraacyldisaccharide 4'-kinase (312 aa).

60-67 (IAGGSGKT) lines the ATP pocket.

It belongs to the LpxK family.

It catalyses the reaction a lipid A disaccharide + ATP = a lipid IVA + ADP + H(+). It participates in glycolipid biosynthesis; lipid IV(A) biosynthesis; lipid IV(A) from (3R)-3-hydroxytetradecanoyl-[acyl-carrier-protein] and UDP-N-acetyl-alpha-D-glucosamine: step 6/6. Transfers the gamma-phosphate of ATP to the 4'-position of a tetraacyldisaccharide 1-phosphate intermediate (termed DS-1-P) to form tetraacyldisaccharide 1,4'-bis-phosphate (lipid IVA). The protein is Tetraacyldisaccharide 4'-kinase of Helicobacter pylori (strain HPAG1).